The primary structure comprises 758 residues: Glucocorticoid receptor (758 aa).

Disordered regions lie at residues 1–61 (MDPG…SANG) and 349–382 (GMSS…PSGP). Residues 1–386 (MDPGGLKHSK…AKPSGPTHKI (386 aa)) are modulating. Over residues 26-42 (GSFSGDTGGSKSTTSTS) the composition is skewed to low complexity. 2 NR C4-type zinc fingers span residues 387–407 (CLVC…CGSC) and 432–456 (CAGR…FRKC). Positions 387–461 (CLVCSDEASG…RFRKCLQAGM (75 aa)) form a DNA-binding region, nuclear receptor. The interval 462–498 (NLEARKNKKLIRLKGQQTTMEPNPPPPDERACALIPK) is hinge. The NR LBD domain occupies 499–733 (SMPQLVPTML…FPEMLAEIIS (235 aa)).

Belongs to the nuclear hormone receptor family. NR3 subfamily. As to quaternary structure, heteromultimeric cytoplasmic complex with HSP90AA1, HSPA1A/HSPA1B, and FKBP5 or another immunophilin such as PPID, STIP1, or the immunophilin homolog PPP5C. Upon ligand binding FKBP5 dissociates from the complex and FKBP4 takes its place, thereby linking the complex to dynein and mediating transport to the nucleus, where the complex dissociates. Directly interacts with UNC45A. Binds to DNA as a homodimer, and as heterodimer with NR3C2 or the retinoid X receptor. Binds STAT5A and STAT5B homodimers and heterodimers. Interacts with NRIP1, POU2F1, POU2F2 and TRIM28. Interacts with several coactivator complexes, including the SMARCA4 complex, CREBBP/EP300, TADA2L (Ada complex) and p160 coactivators such as NCOA2 and NCOA6. Interaction with BAG1 inhibits transactivation. Interacts with HEXIM1, PELP1 and TGFB1I1. Interacts with NCOA1, NCOA3, SMARCA4, SMARCC1, SMARCD1, and SMARCE1. Phosphorylated in the absence of hormone; becomes hyperphosphorylated in the presence of glucocorticoids. May be dephosphorylated by PPP5C, attenuates NR3C1 action. In terms of tissue distribution, isoform 1 is expressed in all tissues tested including liver, gills, intestine, skeletal muscle, kidney, heart, spleen, stomach, brain, pituitary, ovary, testis, skin and bladder. Isoform 2 is found only in testis.

The protein resides in the cytoplasm. It is found in the nucleus. Its subcellular location is the mitochondrion. It localises to the cytoskeleton. The protein localises to the spindle. The protein resides in the microtubule organizing center. It is found in the centrosome. Functionally, receptor for glucocorticoids (GC). Has a dual mode of action: as a transcription factor that binds to glucocorticoid response elements (GRE), both for nuclear and mitochondrial DNA, and as a modulator of other transcription factors. Affects inflammatory responses, cellular proliferation and differentiation in target tissues. Involved in chromatin remodeling. Plays a role in rapid mRNA degradation by binding to the 5' UTR of target mRNAs and interacting with PNRC2 in a ligand-dependent manner which recruits the RNA helicase UPF1 and the mRNA-decapping enzyme DCP1A, leading to RNA decay. Could act as a coactivator for STAT5-dependent transcription upon growth hormone (GH) stimulation and could reveal an essential role of hepatic GR in the control of body growth. Mediates glucocorticoid-induced apoptosis. Promotes accurate chromosome segregation during mitosis. May act as a tumor suppressor. May play a negative role in adipogenesis through the regulation of lipolytic and antilipogenic gene expression. The sequence is that of Glucocorticoid receptor (nr3c1) from Oncorhynchus mykiss (Rainbow trout).